Reading from the N-terminus, the 486-residue chain is CDT1-like protein b (486 aa).

Disordered regions lie at residues 273–294 (PEGGDDNSLRSTNSLARGPSRS) and 348–371 (VKDDISNESGDEKSNYEGDNASDD). The span at 281 to 294 (LRSTNSLARGPSRS) shows a compositional bias: polar residues. The span at 348–363 (VKDDISNESGDEKSNY) shows a compositional bias: basic and acidic residues.

The protein belongs to the Cdt1 family. Expressed in proliferating (e.g. shoot and root apical meristems, organ primordia, guard cells and stomatal lineage) and endoreplicating cells (e.g. developing trichomes).

The protein resides in the nucleus. Functionally, member of the pre-replication complex. Regulates endoreduplication. Involved in the coordination of cell and plastid division. This chain is CDT1-like protein b (CDT1B), found in Arabidopsis thaliana (Mouse-ear cress).